A 192-amino-acid polypeptide reads, in one-letter code: Peptidyl-tRNA hydrolase (192 aa).

A tRNA-binding site is contributed by tyrosine 17. The active-site Proton acceptor is histidine 22. 3 residues coordinate tRNA: phenylalanine 68, asparagine 70, and asparagine 116.

This sequence belongs to the PTH family. Monomer.

The protein resides in the cytoplasm. It catalyses the reaction an N-acyl-L-alpha-aminoacyl-tRNA + H2O = an N-acyl-L-amino acid + a tRNA + H(+). In terms of biological role, hydrolyzes ribosome-free peptidyl-tRNAs (with 1 or more amino acids incorporated), which drop off the ribosome during protein synthesis, or as a result of ribosome stalling. Functionally, catalyzes the release of premature peptidyl moieties from peptidyl-tRNA molecules trapped in stalled 50S ribosomal subunits, and thus maintains levels of free tRNAs and 50S ribosomes. In Xylella fastidiosa (strain M12), this protein is Peptidyl-tRNA hydrolase.